The following is a 397-amino-acid chain: Riboflavin biosynthesis protein RibBA (397 aa).

A DHBP synthase region spans residues 1-199 (MFHRIEEALE…IEDLIAYRRH (199 aa)). D-ribulose 5-phosphate-binding positions include 26–27 (RE), aspartate 31, 138–142 (RAGHT), and glutamate 162. Glutamate 27 provides a ligand contact to Mg(2+). A Mg(2+)-binding site is contributed by histidine 141. The segment at 200–397 (HETLVTREVE…VNKLGHLLNL (198 aa)) is GTP cyclohydrolase II. 250-254 (RVHSE) serves as a coordination point for GTP. Residues cysteine 255, cysteine 266, and cysteine 268 each contribute to the Zn(2+) site. Residues glutamine 271, 293 to 295 (EGR), and threonine 315 contribute to the GTP site. Residue aspartate 327 is the Proton acceptor; for GTP cyclohydrolase activity of the active site. The active-site Nucleophile; for GTP cyclohydrolase activity is arginine 329. GTP-binding residues include threonine 350 and lysine 355.

In the N-terminal section; belongs to the DHBP synthase family. The protein in the C-terminal section; belongs to the GTP cyclohydrolase II family. Mg(2+) is required as a cofactor. Mn(2+) serves as cofactor. The cofactor is Zn(2+).

The enzyme catalyses D-ribulose 5-phosphate = (2S)-2-hydroxy-3-oxobutyl phosphate + formate + H(+). It catalyses the reaction GTP + 4 H2O = 2,5-diamino-6-hydroxy-4-(5-phosphoribosylamino)-pyrimidine + formate + 2 phosphate + 3 H(+). Its pathway is cofactor biosynthesis; riboflavin biosynthesis; 2-hydroxy-3-oxobutyl phosphate from D-ribulose 5-phosphate: step 1/1. The protein operates within cofactor biosynthesis; riboflavin biosynthesis; 5-amino-6-(D-ribitylamino)uracil from GTP: step 1/4. Its function is as follows. Catalyzes the conversion of D-ribulose 5-phosphate to formate and 3,4-dihydroxy-2-butanone 4-phosphate. In terms of biological role, catalyzes the conversion of GTP to 2,5-diamino-6-ribosylamino-4(3H)-pyrimidinone 5'-phosphate (DARP), formate and pyrophosphate. The sequence is that of Riboflavin biosynthesis protein RibBA from Bacillus cereus (strain AH187).